Here is a 1168-residue protein sequence, read N- to C-terminus: DNA-directed RNA polymerase subunit beta (1168 aa).

This sequence belongs to the RNA polymerase beta chain family. As to quaternary structure, the RNAP catalytic core consists of 2 alpha, 1 beta, 1 beta' and 1 omega subunit. When a sigma factor is associated with the core the holoenzyme is formed, which can initiate transcription.

It carries out the reaction RNA(n) + a ribonucleoside 5'-triphosphate = RNA(n+1) + diphosphate. Functionally, DNA-dependent RNA polymerase catalyzes the transcription of DNA into RNA using the four ribonucleoside triphosphates as substrates. This is DNA-directed RNA polymerase subunit beta from Rhodococcus jostii (strain RHA1).